A 242-amino-acid chain; its full sequence is uncharacterized protein (242 aa).

Disordered stretches follow at residues 43–70 (SRRS…TSKD) and 112–162 (RMSR…VTPR). Residues 58–70 (QSVSGRKNSTSKD) are compositionally biased toward polar residues. 2 stretches are compositionally biased toward low complexity: residues 122-139 (ERAA…AGHA) and 147-162 (ADGA…VTPR).

This is an uncharacterized protein from Homo sapiens (Human).